We begin with the raw amino-acid sequence, 434 residues long: Gamma-glutamyl phosphate reductase (434 aa).

It belongs to the gamma-glutamyl phosphate reductase family.

The protein localises to the cytoplasm. It carries out the reaction L-glutamate 5-semialdehyde + phosphate + NADP(+) = L-glutamyl 5-phosphate + NADPH + H(+). The protein operates within amino-acid biosynthesis; L-proline biosynthesis; L-glutamate 5-semialdehyde from L-glutamate: step 2/2. In terms of biological role, catalyzes the NADPH-dependent reduction of L-glutamate 5-phosphate into L-glutamate 5-semialdehyde and phosphate. The product spontaneously undergoes cyclization to form 1-pyrroline-5-carboxylate. This is Gamma-glutamyl phosphate reductase from Nostoc sp. (strain PCC 7120 / SAG 25.82 / UTEX 2576).